Consider the following 363-residue polypeptide: Adenosine deaminase (363 aa).

2 residues coordinate Zn(2+): H42 and H44. Residues 44–46, D172, and G201 each bind a purine D-ribonucleoside; that span reads HLD. The segment at 170-184 is gating helix loop; regulates binding affinity for substrates and thus substrate selectivity; the sequence is IGDTGHEAANIKASA. Position 226 (H226) interacts with Zn(2+). Residues E229, H253, and D310 each coordinate a purine D-ribonucleoside. A Zn(2+)-binding site is contributed by D310.

It belongs to the metallo-dependent hydrolases superfamily. Adenosine and AMP deaminases family. The cofactor is Zn(2+).

It catalyses the reaction adenosine + H2O + H(+) = inosine + NH4(+). The catalysed reaction is S-methyl-5'-thioadenosine + H2O + H(+) = S-methyl-5'-thioinosine + NH4(+). The protein operates within purine metabolism; purine nucleoside salvage. Its activity is regulated as follows. Inhibited by coformycin and methylthiocoformycin (MT-coformycin). Functionally, catalyzes the hydrolytic deamination of adenosine to produce inosine. Unlike mammalian adenosine deaminases, also catalyzes the deamination of 5'-methylthioadenosine (MTA), a by-product of polyamine biosynthesis, to produce 5'-methylthioinosine (MTI). Plays an essential role in the purine salvage pathway which allows the parasite to use host cell purines for the synthesis of nucleic acids. This chain is Adenosine deaminase, found in Plasmodium vivax (strain Salvador I).